A 272-amino-acid chain; its full sequence is tRNA pseudouridine synthase B (272 aa).

The Nucleophile role is filled by Asp38.

Belongs to the pseudouridine synthase TruB family. Type 1 subfamily.

The enzyme catalyses uridine(55) in tRNA = pseudouridine(55) in tRNA. Its function is as follows. Responsible for synthesis of pseudouridine from uracil-55 in the psi GC loop of transfer RNAs. This chain is tRNA pseudouridine synthase B, found in Campylobacter jejuni (strain RM1221).